An 81-amino-acid polypeptide reads, in one-letter code: ATP synthase subunit c, chloroplastic (81 aa).

Helical transmembrane passes span 7–27 (AASVIAAGLAVGLASIGPGIG) and 57–77 (LAFMEALTIYGLVVALALLFA).

Belongs to the ATPase C chain family. As to quaternary structure, F-type ATPases have 2 components, F(1) - the catalytic core - and F(0) - the membrane proton channel. F(1) has five subunits: alpha(3), beta(3), gamma(1), delta(1), epsilon(1). F(0) has four main subunits: a(1), b(1), b'(1) and c(10-14). The alpha and beta chains form an alternating ring which encloses part of the gamma chain. F(1) is attached to F(0) by a central stalk formed by the gamma and epsilon chains, while a peripheral stalk is formed by the delta, b and b' chains.

The protein resides in the plastid. Its subcellular location is the chloroplast thylakoid membrane. Its function is as follows. F(1)F(0) ATP synthase produces ATP from ADP in the presence of a proton or sodium gradient. F-type ATPases consist of two structural domains, F(1) containing the extramembraneous catalytic core and F(0) containing the membrane proton channel, linked together by a central stalk and a peripheral stalk. During catalysis, ATP synthesis in the catalytic domain of F(1) is coupled via a rotary mechanism of the central stalk subunits to proton translocation. Key component of the F(0) channel; it plays a direct role in translocation across the membrane. A homomeric c-ring of between 10-14 subunits forms the central stalk rotor element with the F(1) delta and epsilon subunits. This Staurastrum punctulatum (Green alga) protein is ATP synthase subunit c, chloroplastic.